A 341-amino-acid chain; its full sequence is Protein arginine N-methyltransferase 1 (341 aa).

The region spanning 20–315 (ADYYFDSYSH…DCAPFDKNQR (296 aa)) is the SAM-dependent MTase PRMT-type domain. Residues H33, R42, G66, D88, and E117 each coordinate S-adenosyl-L-methionine. Active-site residues include E132 and E141.

The protein belongs to the class I-like SAM-binding methyltransferase superfamily. Protein arginine N-methyltransferase family.

Its subcellular location is the nucleus. It is found in the cytoplasm. It localises to the cytosol. The enzyme catalyses L-arginyl-[protein] + 2 S-adenosyl-L-methionine = N(omega),N(omega)-dimethyl-L-arginyl-[protein] + 2 S-adenosyl-L-homocysteine + 2 H(+). It carries out the reaction L-arginyl-[protein] + S-adenosyl-L-methionine = N(omega)-methyl-L-arginyl-[protein] + S-adenosyl-L-homocysteine + H(+). Arginine methyltransferase that methylates the guanidino nitrogens of arginyl residues present in proteins such as ribonucleoproteins and histones. In Dictyostelium discoideum (Social amoeba), this protein is Protein arginine N-methyltransferase 1 (prmt1).